A 539-amino-acid polypeptide reads, in one-letter code: MKEAKFIFVTGGVVSSLGKGLVASSVGALLQAHGFKVRIRKLDPYLNIDPGTMSPTQHGEVFVTEDGAETDLDLGHYERFTGIKATKDDNITTGKMYHELLKKERRGDYLGKTVQVIPHVTDLIKSFIFNGTEGLDFVICEIGGTVGDIESQPFLEAIRQISYKLGKQRVILIHLTLVPYLAVAQELKTKPTQHSVRELNFVGLQPDIILCRSEKEISDNQRGKIANLCNVSLSNVISAPDVSHIYELPVLYNQCGLGTQVLEHFHLSKPKPSLVGWNQIVHSMRHPMQEVTVSIVGKYTEFPDTYKSLVEALSHSAISNRIEVKINWVNSREKSGKPINEKFMGDKLKNSHAILVPGGFGDDGIEGKMLAISYARTNNIPFFGICLGMQLAVIEFARNVIKFKDVHSEEFYTCKHPIIKLAGDKNVDLGGTMRLGAYKCNISPNSKMAGAYSDTIISERHRHRYIINLDYKDDLEKNGLICSGMSEDGTYIEAVELENHPWFIGVQFHPEFQSKPFSPHPLFVSFIKAVVNKVKKTEG.

Positions 1-267 (MKEAKFIFVT…GTQVLEHFHL (267 aa)) are amidoligase domain. Ser-15 contributes to the CTP binding site. Ser-15 is a binding site for UTP. Residues 16–21 (SLGKGL) and Asp-73 each bind ATP. Residues Asp-73 and Glu-141 each contribute to the Mg(2+) site. Residues 148 to 150 (DIE), 188 to 193 (KTKPTQ), and Lys-224 contribute to the CTP site. UTP is bound by residues 188 to 193 (KTKPTQ) and Lys-224. Residues 292–536 (TVSIVGKYTE…IKAVVNKVKK (245 aa)) enclose the Glutamine amidotransferase type-1 domain. An L-glutamine-binding site is contributed by Gly-359. Residue Cys-386 is the Nucleophile; for glutamine hydrolysis of the active site. Residues 387–390 (LGMQ), Glu-410, and Arg-464 each bind L-glutamine. Residues His-509 and Glu-511 contribute to the active site.

This sequence belongs to the CTP synthase family. Homotetramer.

The catalysed reaction is UTP + L-glutamine + ATP + H2O = CTP + L-glutamate + ADP + phosphate + 2 H(+). The enzyme catalyses L-glutamine + H2O = L-glutamate + NH4(+). It carries out the reaction UTP + NH4(+) + ATP = CTP + ADP + phosphate + 2 H(+). Its pathway is pyrimidine metabolism; CTP biosynthesis via de novo pathway; CTP from UDP: step 2/2. With respect to regulation, allosterically activated by GTP, when glutamine is the substrate; GTP has no effect on the reaction when ammonia is the substrate. The allosteric effector GTP functions by stabilizing the protein conformation that binds the tetrahedral intermediate(s) formed during glutamine hydrolysis. Inhibited by the product CTP, via allosteric rather than competitive inhibition. Its function is as follows. Catalyzes the ATP-dependent amination of UTP to CTP with either L-glutamine or ammonia as the source of nitrogen. Regulates intracellular CTP levels through interactions with the four ribonucleotide triphosphates. The protein is CTP synthase of Wolbachia sp. subsp. Brugia malayi (strain TRS).